Consider the following 97-residue polypeptide: Plasmid stability protein StbC (97 aa).

Involved in plasmid stability. The chain is Plasmid stability protein StbC (stbC) from Pseudomonas syringae pv. tomato (strain ATCC BAA-871 / DC3000).